We begin with the raw amino-acid sequence, 33 residues long: Photosystem II reaction center protein Psb30 (33 aa).

A helical transmembrane segment spans residues 5-25 (LIGQLVTVALVVGAGPIIIGA).

Belongs to the Psb30/Ycf12 family. As to quaternary structure, PSII is composed of 1 copy each of membrane proteins PsbA, PsbB, PsbC, PsbD, PsbE, PsbF, PsbH, PsbI, PsbJ, PsbK, PsbL, PsbM, PsbT, PsbX, PsbY, PsbZ, Psb30/Ycf12, peripheral proteins of the oxygen-evolving complex and a large number of cofactors. It forms dimeric complexes.

It is found in the plastid. It localises to the chloroplast thylakoid membrane. Its function is as follows. A core subunit of photosystem II (PSII), probably helps stabilize the reaction center. The sequence is that of Photosystem II reaction center protein Psb30 from Ostreococcus tauri.